The chain runs to 236 residues: ATP synthase subunit a (236 aa).

5 helical membrane passes run 17–37 (LSDM…AVAA), 75–95 (FLTL…LGLP), 112–132 (DATV…YYGV), 174–194 (IYAG…YGVL), and 208–228 (FSIF…MVYM).

This sequence belongs to the ATPase A chain family. In terms of assembly, F-type ATPases have 2 components, CF(1) - the catalytic core - and CF(0) - the membrane proton channel. CF(1) has five subunits: alpha(3), beta(3), gamma(1), delta(1), epsilon(1). CF(0) has three main subunits: a(1), b(2) and c(9-12). The alpha and beta chains form an alternating ring which encloses part of the gamma chain. CF(1) is attached to CF(0) by a central stalk formed by the gamma and epsilon chains, while a peripheral stalk is formed by the delta and b chains.

Its subcellular location is the cell membrane. In terms of biological role, key component of the proton channel; it plays a direct role in the translocation of protons across the membrane. The chain is ATP synthase subunit a from Geobacillus stearothermophilus (Bacillus stearothermophilus).